We begin with the raw amino-acid sequence, 512 residues long: tRNA-2-methylthio-N(6)-dimethylallyladenosine synthase (512 aa).

Residues 1–22 (MVAHDAAAGVTGEGAGPPVRRA) are disordered. The 117-residue stretch at 25 to 141 (RTYQVRTYGC…LPTLLERARH (117 aa)) folds into the MTTase N-terminal domain. [4Fe-4S] cluster-binding residues include cysteine 34, cysteine 70, cysteine 104, cysteine 178, cysteine 182, and cysteine 185. The 237-residue stretch at 164–400 (RESAYAAWVS…IALQEQISLE (237 aa)) folds into the Radical SAM core domain. In terms of domain architecture, TRAM spans 403-471 (RALVGQAVEV…PHHLIADAGV (69 aa)).

It belongs to the methylthiotransferase family. MiaB subfamily. As to quaternary structure, monomer. It depends on [4Fe-4S] cluster as a cofactor.

The protein resides in the cytoplasm. It catalyses the reaction N(6)-dimethylallyladenosine(37) in tRNA + (sulfur carrier)-SH + AH2 + 2 S-adenosyl-L-methionine = 2-methylsulfanyl-N(6)-dimethylallyladenosine(37) in tRNA + (sulfur carrier)-H + 5'-deoxyadenosine + L-methionine + A + S-adenosyl-L-homocysteine + 2 H(+). Catalyzes the methylthiolation of N6-(dimethylallyl)adenosine (i(6)A), leading to the formation of 2-methylthio-N6-(dimethylallyl)adenosine (ms(2)i(6)A) at position 37 in tRNAs that read codons beginning with uridine. The protein is tRNA-2-methylthio-N(6)-dimethylallyladenosine synthase of Mycobacterium bovis (strain ATCC BAA-935 / AF2122/97).